Here is a 223-residue protein sequence, read N- to C-terminus: UPF0441 protein ETA_04310 (223 aa).

Residues 166–223 (YGAATPGRTMTVPKSALAPKPATTSTVTRGGFGESVAKQNTMQRNSSSTGSANRSMGG) are disordered. Residues 202-223 (AKQNTMQRNSSSTGSANRSMGG) show a composition bias toward polar residues.

Belongs to the UPF0441 family.

This chain is UPF0441 protein ETA_04310, found in Erwinia tasmaniensis (strain DSM 17950 / CFBP 7177 / CIP 109463 / NCPPB 4357 / Et1/99).